The chain runs to 414 residues: Serine/threonine transporter SstT (414 aa).

8 helical membrane passes run 16–36 (GSLV…AWVS), 46–66 (LGTL…LMLV), 84–104 (ILFL…VFSF), 143–163 (ALLN…GFAL), 180–200 (AVTF…FGLV), 219–239 (LVVL…LLVF), 300–320 (MAGA…TLGV), and 332–352 (VVAS…LLLI).

This sequence belongs to the dicarboxylate/amino acid:cation symporter (DAACS) (TC 2.A.23) family.

It is found in the cell inner membrane. It catalyses the reaction L-serine(in) + Na(+)(in) = L-serine(out) + Na(+)(out). It carries out the reaction L-threonine(in) + Na(+)(in) = L-threonine(out) + Na(+)(out). Functionally, involved in the import of serine and threonine into the cell, with the concomitant import of sodium (symport system). This is Serine/threonine transporter SstT from Salmonella arizonae (strain ATCC BAA-731 / CDC346-86 / RSK2980).